The primary structure comprises 495 residues: MAKNKIRVRYAPSPTGHLHIGNARTALFNYLFARHNKGTFVIRIEDTDTKRNIADGENSQLDNLKWLGMDWDEGPDKPGNYGPYRQSERREIYTPLIQELVEKGLAYESYKTEDELTAEREAQKAAGEAPRYVYEYEGMSDDEIKASQEAARAKGLQPVVRLRLPKDHVYKFDDIVKGEISFESDRLGGDFVIMKRDGMPTYNFAVVVDDHLMEITHVLRGDDHIANTPKQLAVYEAFGWEPPIFGHMTLIINTETGKKLSKRDESVLQFIEQYRELGYLPEAMFNFIALLGWSPVGESELFNRQEFIKQFDPRRLSKSPASFDQKKLEWVNNQYVKQSDPNKIMDLSLDSLIKAGKIAANPDSKTIEWARHLIALYQDQMSYTAQIVEMSDVFFEEPEQLDAEALEELNNETAPVVLKEFSERLKDLTLFTAPRIMQIIKGIQKDTKIKGRLLYMPIRIATTREMHGPSLPDSIELLGKDRVLAHLEKTLAEIK.

The short motif at 12-22 (PSPTGHLHIGN) is the 'HIGH' region element. A 'KMSKS' region motif is present at residues 259–263 (KLSKR). ATP is bound at residue K262.

This sequence belongs to the class-I aminoacyl-tRNA synthetase family. Glutamate--tRNA ligase type 1 subfamily. As to quaternary structure, monomer.

The protein resides in the cytoplasm. It catalyses the reaction tRNA(Glu) + L-glutamate + ATP = L-glutamyl-tRNA(Glu) + AMP + diphosphate. In terms of biological role, catalyzes the attachment of glutamate to tRNA(Glu) in a two-step reaction: glutamate is first activated by ATP to form Glu-AMP and then transferred to the acceptor end of tRNA(Glu). This chain is Glutamate--tRNA ligase, found in Latilactobacillus sakei subsp. sakei (strain 23K) (Lactobacillus sakei subsp. sakei).